A 261-amino-acid polypeptide reads, in one-letter code: Ribosomal RNA small subunit methyltransferase A (261 aa).

S-adenosyl-L-methionine contacts are provided by N20, L22, G47, E68, D90, and N110.

This sequence belongs to the class I-like SAM-binding methyltransferase superfamily. rRNA adenine N(6)-methyltransferase family. RsmA subfamily.

The protein resides in the cytoplasm. The enzyme catalyses adenosine(1518)/adenosine(1519) in 16S rRNA + 4 S-adenosyl-L-methionine = N(6)-dimethyladenosine(1518)/N(6)-dimethyladenosine(1519) in 16S rRNA + 4 S-adenosyl-L-homocysteine + 4 H(+). In terms of biological role, specifically dimethylates two adjacent adenosines (A1518 and A1519) in the loop of a conserved hairpin near the 3'-end of 16S rRNA in the 30S particle. May play a critical role in biogenesis of 30S subunits. The polypeptide is Ribosomal RNA small subunit methyltransferase A (Prosthecochloris aestuarii (strain DSM 271 / SK 413)).